The following is a 585-amino-acid chain: Glutamate decarboxylase 2 (585 aa).

A disordered region spans residues methionine 1–threonine 25. 5 positions are modified to phosphoserine: serine 3, serine 6, serine 10, serine 13, and serine 17. 2 S-palmitoyl cysteine lipidation sites follow: cysteine 30 and cysteine 45. Residue glutamine 181–serine 183 participates in substrate binding. At lysine 396 the chain carries N6-(pyridoxal phosphate)lysine. Residue arginine 558 participates in substrate binding.

The protein belongs to the group II decarboxylase family. Homodimer. Requires pyridoxal 5'-phosphate as cofactor. In terms of processing, the N-terminus is blocked. Post-translationally, phosphorylated; which does not affect kinetic parameters or subcellular location. Palmitoylated; which is required for presynaptic clustering.

Its subcellular location is the cytoplasm. It localises to the cytosol. It is found in the cytoplasmic vesicle. The protein localises to the presynaptic cell membrane. The protein resides in the golgi apparatus membrane. The catalysed reaction is L-glutamate + H(+) = 4-aminobutanoate + CO2. Functionally, catalyzes the production of GABA. This Rattus norvegicus (Rat) protein is Glutamate decarboxylase 2 (Gad2).